Here is a 195-residue protein sequence, read N- to C-terminus: Peptidyl-tRNA hydrolase (195 aa).

Residue Tyr-17 participates in tRNA binding. Residue His-22 is the Proton acceptor of the active site. Phe-68, Asn-70, and Asn-116 together coordinate tRNA.

The protein belongs to the PTH family. Monomer.

It localises to the cytoplasm. The enzyme catalyses an N-acyl-L-alpha-aminoacyl-tRNA + H2O = an N-acyl-L-amino acid + a tRNA + H(+). Hydrolyzes ribosome-free peptidyl-tRNAs (with 1 or more amino acids incorporated), which drop off the ribosome during protein synthesis, or as a result of ribosome stalling. Its function is as follows. Catalyzes the release of premature peptidyl moieties from peptidyl-tRNA molecules trapped in stalled 50S ribosomal subunits, and thus maintains levels of free tRNAs and 50S ribosomes. This Shewanella denitrificans (strain OS217 / ATCC BAA-1090 / DSM 15013) protein is Peptidyl-tRNA hydrolase.